A 311-amino-acid polypeptide reads, in one-letter code: GTPase Era (311 aa).

Residues 16–188 (HAGFVAIVGK…REQLLEVLPE (173 aa)) form the Era-type G domain. A G1 region spans residues 24–31 (GKPNVGKS). 24-31 (GKPNVGKS) contacts GTP. The interval 50 to 54 (QTTRR) is G2. The segment at 71-74 (DTPG) is G3. Residues 71 to 75 (DTPGL) and 133 to 136 (NKTD) contribute to the GTP site. Residues 133–136 (NKTD) are G4. The interval 166 to 168 (LSA) is G5. One can recognise a KH type-2 domain in the interval 219–296 (LRDELPYAVA…YLGLEVIVIP (78 aa)).

This sequence belongs to the TRAFAC class TrmE-Era-EngA-EngB-Septin-like GTPase superfamily. Era GTPase family. In terms of assembly, monomer.

The protein resides in the cytoplasm. The protein localises to the cell membrane. An essential GTPase that binds both GDP and GTP, with rapid nucleotide exchange. Plays a role in 16S rRNA processing and 30S ribosomal subunit biogenesis and possibly also in cell cycle regulation and energy metabolism. The polypeptide is GTPase Era (Deinococcus radiodurans (strain ATCC 13939 / DSM 20539 / JCM 16871 / CCUG 27074 / LMG 4051 / NBRC 15346 / NCIMB 9279 / VKM B-1422 / R1)).